The sequence spans 111 residues: High mobility group protein Z (111 aa).

A DNA-binding region (HMG box) is located at residues 6-72; it reads PKRPLSAYML…EYNKAVKEYE (67 aa). At serine 11 the chain carries Phosphoserine. Residues 72 to 111 are disordered; the sequence is EANGGTDSGAPKKRKKAAAKPAKKAKKKESSEEEEEDESE. Residues 82 to 98 show a composition bias toward basic residues; that stretch reads PKKRKKAAAKPAKKAKK. Residues 102 to 111 show a composition bias toward acidic residues; it reads SEEEEEDESE.

This sequence belongs to the HMGB family.

The protein resides in the nucleus. It localises to the chromosome. The sequence is that of High mobility group protein Z (HmgZ) from Drosophila melanogaster (Fruit fly).